The primary structure comprises 302 residues: tRNA pseudouridine synthase B (302 aa).

D45 functions as the Nucleophile in the catalytic mechanism.

Belongs to the pseudouridine synthase TruB family. Type 1 subfamily.

The enzyme catalyses uridine(55) in tRNA = pseudouridine(55) in tRNA. Its function is as follows. Responsible for synthesis of pseudouridine from uracil-55 in the psi GC loop of transfer RNAs. The polypeptide is tRNA pseudouridine synthase B (Francisella tularensis subsp. novicida (strain U112)).